A 166-amino-acid chain; its full sequence is Protein C2-DOMAIN ABA-RELATED 11 (166 aa).

At Met-1 the chain carries N-acetylmethionine. Residues 1 to 103 (MGEPLGLLQV…ISVARLRHVV (103 aa)) form the C2 domain. Position 2 is an N-acetylglycine; in Protein C2-DOMAIN ABA-RELATED 11, N-terminally processed (Gly-2). Residues Arg-21, Asp-22, Asp-27, Asp-73, Lys-74, Asp-75, and Asp-81 each contribute to the Ca(2+) site.

It belongs to the plant CAR protein family. In terms of assembly, binds to PYR/PYL/RCAR abscisic acid intracellular receptors in an ABA-independent manner, both at the plasma membrane and in the nucleus.

Its subcellular location is the cell membrane. The protein localises to the nucleus. Functionally, stimulates the GTPase/ATPase activities of Obg-like ATPases. Mediates the transient calcium-dependent interaction of PYR/PYL/RCAR abscisic acid (ABA) receptors with the plasma membrane and thus regulates ABA sensitivity. The protein is Protein C2-DOMAIN ABA-RELATED 11 of Arabidopsis thaliana (Mouse-ear cress).